Here is a 334-residue protein sequence, read N- to C-terminus: Retinol dehydrogenase 13 (334 aa).

S2 carries the post-translational modification N-acetylserine. 45–51 contributes to the NADP(+) binding site; that stretch reads GANTGIG. A substrate-binding site is contributed by S174. Y200 serves as the catalytic Proton acceptor.

Belongs to the short-chain dehydrogenases/reductases (SDR) family.

The protein resides in the mitochondrion inner membrane. The enzyme catalyses all-trans-retinol + NADP(+) = all-trans-retinal + NADPH + H(+). Its pathway is cofactor metabolism; retinol metabolism. Functionally, retinol dehydrogenase with a clear preference for NADP. Oxidizes all-trans-retinol, but seems to reduce all-trans-retinal with much higher efficiency. Has no activity towards steroid. The sequence is that of Retinol dehydrogenase 13 (Rdh13) from Mus musculus (Mouse).